We begin with the raw amino-acid sequence, 396 residues long: 1-deoxy-D-xylulose 5-phosphate reductoisomerase (396 aa).

Positions 10, 11, 12, 13, 38, and 123 each coordinate NADPH. 1-deoxy-D-xylulose 5-phosphate is bound at residue lysine 124. Glutamate 125 contacts NADPH. Aspartate 149 lines the Mn(2+) pocket. 1-deoxy-D-xylulose 5-phosphate contacts are provided by serine 150, glutamate 151, serine 185, and histidine 208. Glutamate 151 is a binding site for Mn(2+). Glycine 214 provides a ligand contact to NADPH. Serine 221, asparagine 226, lysine 227, and glutamate 230 together coordinate 1-deoxy-D-xylulose 5-phosphate. Glutamate 230 contacts Mn(2+).

Belongs to the DXR family. The cofactor is Mg(2+). Mn(2+) is required as a cofactor.

The catalysed reaction is 2-C-methyl-D-erythritol 4-phosphate + NADP(+) = 1-deoxy-D-xylulose 5-phosphate + NADPH + H(+). It participates in isoprenoid biosynthesis; isopentenyl diphosphate biosynthesis via DXP pathway; isopentenyl diphosphate from 1-deoxy-D-xylulose 5-phosphate: step 1/6. Its function is as follows. Catalyzes the NADPH-dependent rearrangement and reduction of 1-deoxy-D-xylulose-5-phosphate (DXP) to 2-C-methyl-D-erythritol 4-phosphate (MEP). The polypeptide is 1-deoxy-D-xylulose 5-phosphate reductoisomerase (Shewanella piezotolerans (strain WP3 / JCM 13877)).